Reading from the N-terminus, the 258-residue chain is Tryptophan synthase alpha chain (258 aa).

Active-site proton acceptor residues include E52 and D63.

It belongs to the TrpA family. Tetramer of two alpha and two beta chains.

The catalysed reaction is (1S,2R)-1-C-(indol-3-yl)glycerol 3-phosphate + L-serine = D-glyceraldehyde 3-phosphate + L-tryptophan + H2O. It participates in amino-acid biosynthesis; L-tryptophan biosynthesis; L-tryptophan from chorismate: step 5/5. The alpha subunit is responsible for the aldol cleavage of indoleglycerol phosphate to indole and glyceraldehyde 3-phosphate. In Streptococcus pneumoniae serotype 19F (strain G54), this protein is Tryptophan synthase alpha chain.